Consider the following 153-residue polypeptide: Putative pre-16S rRNA nuclease (153 aa).

This sequence belongs to the YqgF nuclease family.

It localises to the cytoplasm. In terms of biological role, could be a nuclease involved in processing of the 5'-end of pre-16S rRNA. The sequence is that of Putative pre-16S rRNA nuclease from Chloroflexus aurantiacus (strain ATCC 29366 / DSM 635 / J-10-fl).